The chain runs to 129 residues: UPF0102 protein CPS_4433 (129 aa).

The protein belongs to the UPF0102 family.

The sequence is that of UPF0102 protein CPS_4433 from Colwellia psychrerythraea (strain 34H / ATCC BAA-681) (Vibrio psychroerythus).